We begin with the raw amino-acid sequence, 842 residues long: Protein translocase subunit SecA (842 aa).

ATP contacts are provided by residues Q85, 103 to 107 (GEGKT), and D493. Zn(2+) contacts are provided by C825, C827, C836, and H837.

It belongs to the SecA family. Monomer and homodimer. Part of the essential Sec protein translocation apparatus which comprises SecA, SecYEG and auxiliary proteins SecDF. Other proteins may also be involved. The cofactor is Zn(2+).

The protein localises to the cell membrane. It localises to the cytoplasm. It catalyses the reaction ATP + H2O + cellular proteinSide 1 = ADP + phosphate + cellular proteinSide 2.. Part of the Sec protein translocase complex. Interacts with the SecYEG preprotein conducting channel. Has a central role in coupling the hydrolysis of ATP to the transfer of proteins into and across the cell membrane, serving as an ATP-driven molecular motor driving the stepwise translocation of polypeptide chains across the membrane. This is Protein translocase subunit SecA from Streptococcus equi subsp. equi (strain 4047).